The sequence spans 35 residues: Photosystem II reaction center protein T (35 aa).

Residues 3–23 (ALVYTFLLVSTLGIIFFAIFF) traverse the membrane as a helical segment.

The protein belongs to the PsbT family. In terms of assembly, PSII is composed of 1 copy each of membrane proteins PsbA, PsbB, PsbC, PsbD, PsbE, PsbF, PsbH, PsbI, PsbJ, PsbK, PsbL, PsbM, PsbT, PsbY, PsbZ, Psb30/Ycf12, at least 3 peripheral proteins of the oxygen-evolving complex and a large number of cofactors. It forms dimeric complexes.

Its subcellular location is the plastid. The protein localises to the chloroplast thylakoid membrane. Found at the monomer-monomer interface of the photosystem II (PS II) dimer, plays a role in assembly and dimerization of PSII. PSII is a light-driven water plastoquinone oxidoreductase, using light energy to abstract electrons from H(2)O, generating a proton gradient subsequently used for ATP formation. The protein is Photosystem II reaction center protein T of Cycas revoluta (Sago palm).